We begin with the raw amino-acid sequence, 343 residues long: Branched-chain-amino-acid aminotransferase (343 aa).

Lysine 182 is modified (N6-(pyridoxal phosphate)lysine).

The protein belongs to the class-IV pyridoxal-phosphate-dependent aminotransferase family. It depends on pyridoxal 5'-phosphate as a cofactor.

It carries out the reaction L-leucine + 2-oxoglutarate = 4-methyl-2-oxopentanoate + L-glutamate. The enzyme catalyses L-isoleucine + 2-oxoglutarate = (S)-3-methyl-2-oxopentanoate + L-glutamate. The catalysed reaction is L-valine + 2-oxoglutarate = 3-methyl-2-oxobutanoate + L-glutamate. It functions in the pathway amino-acid biosynthesis; L-isoleucine biosynthesis; L-isoleucine from 2-oxobutanoate: step 4/4. Its pathway is amino-acid biosynthesis; L-leucine biosynthesis; L-leucine from 3-methyl-2-oxobutanoate: step 4/4. The protein operates within amino-acid biosynthesis; L-valine biosynthesis; L-valine from pyruvate: step 4/4. In terms of biological role, acts on leucine, isoleucine and valine. The polypeptide is Branched-chain-amino-acid aminotransferase (ilvE) (Haemophilus influenzae (strain ATCC 51907 / DSM 11121 / KW20 / Rd)).